We begin with the raw amino-acid sequence, 396 residues long: Phosphoglycerate kinase (396 aa).

Residues 21–23 (DFN), R36, 59–62 (HLGK), R119, and R156 contribute to the substrate site. ATP-binding positions include K206, G294, E325, and 352–355 (GGDS).

The protein belongs to the phosphoglycerate kinase family. Monomer.

The protein localises to the cytoplasm. The catalysed reaction is (2R)-3-phosphoglycerate + ATP = (2R)-3-phospho-glyceroyl phosphate + ADP. Its pathway is carbohydrate degradation; glycolysis; pyruvate from D-glyceraldehyde 3-phosphate: step 2/5. The sequence is that of Phosphoglycerate kinase from Staphylococcus aureus (strain bovine RF122 / ET3-1).